The sequence spans 215 residues: Porin MspB (215 aa).

An N-terminal signal peptide occupies residues 1 to 31 (MTAFKRVLIAMISALLAGTTGMFVSAGAAHA).

This sequence belongs to the mycobacterial porin (TC 1.B.24) family. As to quaternary structure, octamers. Probably forms a goblet with the wide end on the exterior of the outer membrane and a central channel. It is not known if mixed oligomers of MspB with other Msp subunits form in vivo.

It localises to the cell outer membrane. It is found in the secreted. The protein resides in the cell wall. In terms of biological role, a backup porin induced when MspA, the major porin, is deleted. Probably forms a water-filled channel which favors the permeation of cations. There are about 2400 porins in wild-type, 800 in an mspA deletion and 150 in a double mspA-mspC deletion. A triple mspA-mspC-mspD deletion mutant has low but detectable channel activity. Different conductance values with maxima at 2.3 and 4.6 nanosiemens might be caused by a simultaneous reconstitution of MspB channels into the membrane or by the existence of different MspB conformations. The chain is Porin MspB (mspB) from Mycolicibacterium smegmatis (strain ATCC 700084 / mc(2)155) (Mycobacterium smegmatis).